The chain runs to 377 residues: Sodium-dependent organic anion transporter (377 aa).

The Extracellular portion of the chain corresponds to 1 to 29 (MRANCSSGLACPANSSEEELPEGLKAFGN). N4 is a glycosylation site (N-linked (GlcNAc...) asparagine). A helical transmembrane segment spans residues 30–50 (LDLVFTVVSALMIGLLMFSLG). Residues 51-67 (CSVEVQKLWGHIRRPWG) lie on the Cytoplasmic side of the membrane. Residues 68–88 (IAVGMLCQFGLMPLIAYLLII) traverse the membrane as a helical segment. Over 89–97 (SFSLKPLQA) the chain is Extracellular. A helical transmembrane segment spans residues 98–118 (IAVLIMGCCPGGTVSNIFTFW). Over 119–133 (VDGDMDLSISMTTCS) the chain is Cytoplasmic. A helical membrane pass occupies residues 134–154 (TMAALGMMPLCLYLYTLSWNL). Over 155–159 (EQNLT) the chain is Extracellular. N157 carries N-linked (GlcNAc...) asparagine glycosylation. The chain crosses the membrane as a helical span at residues 160 to 180 (IPYQNIGITLVCLIIPVAFGI). The Cytoplasmic portion of the chain corresponds to 181–195 (YVNYRWPKQSKIILK). A helical transmembrane segment spans residues 196 to 216 (IGAIAGGLLFLVVTGAGMVLM). Topologically, residues 217–223 (KEFWSSD) are extracellular. A helical membrane pass occupies residues 224 to 244 (IILLMISFIFPLIGHATGFLL). At 245 to 257 (ALLTHQSWQRCRT) the chain is on the cytoplasmic side. The helical transmembrane segment at 258 to 278 (ISLETGTQNVQMCFTMLQLSF) threads the bilayer. Residues 279–285 (TAEQLVQ) are Extracellular-facing. Residues 286–306 (IFGFVLAYGLFQMLNGFFMVA) form a helical membrane-spanning segment. At 307-377 (AYKMYKRRLK…TPTGDIARAK (71 aa)) the chain is on the cytoplasmic side. The tract at residues 319-377 (HGNEKPSCQEARHRKKSTSPKETTAFLEVNEEATLSPGPSGPVDPHGAPTPTGDIARAK) is disordered.

It belongs to the bile acid:sodium symporter (BASS) (TC 2.A.28) family. Post-translationally, glycosylated.

The protein localises to the membrane. It carries out the reaction estrone 3-sulfate(out) + 2 Na(+)(out) = estrone 3-sulfate(in) + 2 Na(+)(in). It catalyses the reaction 17beta-estradiol 3-sulfate(out) + 2 Na(+)(out) = 17beta-estradiol 3-sulfate(in) + 2 Na(+)(in). The enzyme catalyses dehydroepiandrosterone 3-sulfate(out) + 2 Na(+)(out) = dehydroepiandrosterone 3-sulfate(in) + 2 Na(+)(in). The catalysed reaction is androst-5-ene-diol 3-sulfate(out) + 2 Na(+)(out) = androst-5-ene-diol 3-sulfate(in) + 2 Na(+)(in). It carries out the reaction pregnenolone sulfate(out) + 2 Na(+)(out) = pregnenolone sulfate(in) + 2 Na(+)(in). It catalyses the reaction taurolithocholate 3-sulfate(out) + 2 Na(+)(out) = taurolithocholate 3-sulfate(in) + 2 Na(+)(in). The enzyme catalyses androsterone 3alpha-sulfate(out) + 2 Na(+)(out) = androsterone 3alpha-sulfate(in) + 2 Na(+)(in). The catalysed reaction is 5alpha-dihydrotestosterone sulfate(out) + 2 Na(+)(out) = 5alpha-dihydrotestosterone sulfate(in) + 2 Na(+)(in). It carries out the reaction 17beta-estradiol 17-sulfate(out) + 2 Na(+)(out) = 17beta-estradiol 17-sulfate(in) + 2 Na(+)(in). It catalyses the reaction 17alpha-hydroxypregnenolone 3-sulfate(out) + 2 Na(+)(out) = 17alpha-hydroxypregnenolone 3-sulfate(in) + 2 Na(+)(in). The enzyme catalyses epiandrosterone 3-sulfate(out) + 2 Na(+)(out) = epiandrosterone 3-sulfate(in) + 2 Na(+)(in). The catalysed reaction is epitestosterone 17-sulfate(out) + 2 Na(+)(out) = epitestosterone 17-sulfate(in) + 2 Na(+)(in). It carries out the reaction testosterone 17-sulfate(out) + 2 Na(+)(out) = testosterone 17-sulfate(in) + 2 Na(+)(in). It catalyses the reaction 16alpha-hydroxydehydroepiandrosterone 3-sulfate(out) + 2 Na(+)(out) = 16alpha-hydroxydehydroepiandrosterone 3-sulfate(in) + 2 Na(+)(in). Functionally, transports sulfoconjugated steroid hormones from the extracellular compartment into the cytosol in a sodium-dependent manner without hydrolysis. Steroid sulfate hormones are commonly considered to be biologically inactive metabolites, that may be activated by steroid sulfatases into free steroids. May play an important role by delivering sulfoconjugated steroids to specific target cells in reproductive organs. May play a role transporting the estriol precursor 16alpha-hydroxydehydroepiandrosterone 3-sulfate (16a-OH-DHEAS) at the fetal blood vessel endothelium. Can also transport other sulfoconjugated molecules such as taurolithocholic acid-3-sulfate and sulfoconjugated pyrenes. In Bos taurus (Bovine), this protein is Sodium-dependent organic anion transporter (SLC10A6).